The following is a 477-amino-acid chain: Tyrosine--tRNA ligase, mitochondrial (477 aa).

The transit peptide at 1-16 directs the protein to the mitochondrion; sequence MAAPILRSFSWGRWSG. Y77 is an L-tyrosine binding site. D81 is an ATP binding site. The 'HIGH' region motif lies at 82-91; the sequence is PTADSLHVGH. L-tyrosine contacts are provided by D121, Y221, Q225, and D228. ATP is bound at residue 244–246; that stretch reads GSD. Q247 contributes to the L-tyrosine binding site. 2 residues coordinate ATP: I274 and K284. Residues 281 to 285 carry the 'KMSKS' region motif; that stretch reads KLGKS. An N6-acetyllysine mark is found at K355 and K367.

It belongs to the class-I aminoacyl-tRNA synthetase family. Homodimer.

It is found in the mitochondrion matrix. It carries out the reaction tRNA(Tyr) + L-tyrosine + ATP = L-tyrosyl-tRNA(Tyr) + AMP + diphosphate + H(+). Functionally, catalyzes the attachment of tyrosine to tRNA(Tyr) in a two-step reaction: tyrosine is first activated by ATP to form Tyr-AMP and then transferred to the acceptor end of tRNA(Tyr). The sequence is that of Tyrosine--tRNA ligase, mitochondrial (YARS2) from Homo sapiens (Human).